The following is a 2033-amino-acid chain: Envoplakin (2033 aa).

Residues 1-27 are compositionally biased toward low complexity; that stretch reads MFKGLSKGSQGKGSPKGSPAKGSPKGS. Disordered regions lie at residues 1-37 and 65-85; these read MFKG…AATQ and QQDR…ETGR. The segment at 1 to 841 is globular 1; that stretch reads MFKGLSKGSQ…LEPTLAVSAP (841 aa). The 4 X 4 AA tandem repeats of K-G-S-P stretch occupies residues 12–28; that stretch reads KGSPKGSPAKGSPKGSP. Residues 71–84 show a composition bias toward polar residues; the sequence is SEQSQALQHQQETG. Residues 229 to 330 form a Spectrin repeat; the sequence is YTHLQGCTRQ…LCICQETQLQ (102 aa). Positions 388 to 401 are enriched in basic and acidic residues; it reads TERATGDLQRRSRD. 2 disordered regions span residues 388-418 and 891-916; these read TERA…PLHV and SEDI…ESEA. Residues 413 to 470 enclose the SH3 domain; the sequence is QQPLHVDSICDWDSGEVQLLQGERYKLVDNTDPHAWVVQGPGGETKRAPAACFCIPAP. Positions 842 to 1673 are central fibrous rod domain; the sequence is KRPRVAPLQE…AKVSREELSQ (832 aa). The stretch at 845 to 1135 forms a coiled coil; it reads RVAPLQESIQ…AISSVEPKVI (291 aa). Over residues 891–902 the composition is skewed to basic and acidic residues; the sequence is SEDIRRTHDAKQ. The Plectin 1 repeat unit spans residues 1185–1226; it reads KQRPKVQLQERVHEIFQVDPETEQEITRLKAKLQEMAGKRSG. Ser1575 bears the Phosphoserine mark. A compositionally biased stretch (low complexity) spans 1614-1623; the sequence is QEESKLLSQK. Residues 1614–1636 form a disordered region; sequence QEESKLLSQKTESERQKAAQRGQ. The segment at 1674 to 2033 is globular 2; the sequence is ETQTRETNLS…ASPTVPRSLR (360 aa). The Plectin 2 repeat unit spans residues 1678–1713; the sequence is RETNLSTKISILEPETGKDMSPYEAYKRGIIDRGQY. Phosphoserine is present on Ser1799. 5 Plectin repeats span residues 1818–1855, 1856–1893, 1894–1931, 1932–1969, and 1970–2007; these read LGLG…PITG, QKLL…NTST, QRLL…RESV, LPHL…EELA, and QLLQ…PLSG. Phosphoserine is present on Ser2025.

It belongs to the plakin or cytolinker family. May form a homodimer or a heterodimer with PPL. In terms of tissue distribution, exclusively expressed in stratified squamous epithelia.

The protein resides in the cell junction. Its subcellular location is the desmosome. It is found in the cornified envelope. It localises to the cytoplasm. The protein localises to the cytoskeleton. Functionally, component of the cornified envelope of keratinocytes. May link the cornified envelope to desmosomes and intermediate filaments. The protein is Envoplakin (EVPL) of Homo sapiens (Human).